The following is a 492-amino-acid chain: Citrate synthase, peroxisomal (492 aa).

Residues His307, His346, and Asp402 contribute to the active site. The interval 469–492 is disordered; the sequence is PAKVRSQDSYSSATTKRYSKVTSH. The segment covering 475 to 484 has biased composition (polar residues); the sequence is QDSYSSATTK.

This sequence belongs to the citrate synthase family.

It is found in the peroxisome. It carries out the reaction oxaloacetate + acetyl-CoA + H2O = citrate + CoA + H(+). It participates in carbohydrate metabolism; tricarboxylic acid cycle; isocitrate from oxaloacetate: step 1/2. Peroxisomal protein involved in the cellular biosynthesis of citrate, and required primarily for cell growth and modulation of multicellular development. The chain is Citrate synthase, peroxisomal (cshA) from Dictyostelium discoideum (Social amoeba).